An 872-amino-acid chain; its full sequence is Alanine--tRNA ligase (872 aa).

Zn(2+)-binding residues include His567, His571, Cys669, and His673.

The protein belongs to the class-II aminoacyl-tRNA synthetase family. Zn(2+) is required as a cofactor.

The protein localises to the cytoplasm. The catalysed reaction is tRNA(Ala) + L-alanine + ATP = L-alanyl-tRNA(Ala) + AMP + diphosphate. Functionally, catalyzes the attachment of alanine to tRNA(Ala) in a two-step reaction: alanine is first activated by ATP to form Ala-AMP and then transferred to the acceptor end of tRNA(Ala). Also edits incorrectly charged Ser-tRNA(Ala) and Gly-tRNA(Ala) via its editing domain. The chain is Alanine--tRNA ligase from Streptococcus pyogenes serotype M18 (strain MGAS8232).